A 312-amino-acid polypeptide reads, in one-letter code: Ribosomal RNA small subunit methyltransferase H (312 aa).

Residues 37–39 (GGH), D57, F83, and D104 each bind S-adenosyl-L-methionine.

The protein belongs to the methyltransferase superfamily. RsmH family.

It localises to the cytoplasm. It catalyses the reaction cytidine(1402) in 16S rRNA + S-adenosyl-L-methionine = N(4)-methylcytidine(1402) in 16S rRNA + S-adenosyl-L-homocysteine + H(+). Its function is as follows. Specifically methylates the N4 position of cytidine in position 1402 (C1402) of 16S rRNA. The chain is Ribosomal RNA small subunit methyltransferase H from Malacoplasma penetrans (strain HF-2) (Mycoplasma penetrans).